The sequence spans 132 residues: Small ribosomal subunit protein uS11 (132 aa).

The protein belongs to the universal ribosomal protein uS11 family. In terms of assembly, part of the 30S ribosomal subunit. Interacts with proteins S7 and S18. Binds to IF-3.

Functionally, located on the platform of the 30S subunit, it bridges several disparate RNA helices of the 16S rRNA. Forms part of the Shine-Dalgarno cleft in the 70S ribosome. This Bifidobacterium animalis subsp. lactis (strain AD011) protein is Small ribosomal subunit protein uS11.